The following is an 865-amino-acid chain: cGMP-specific 3',5'-cyclic phosphodiesterase (865 aa).

Ser-92 carries the post-translational modification Phosphoserine. GAF domains lie at 154–304 and 336–493; these read DVTA…GIVL and SLEV…GLGI. Positions 526–850 constitute a PDEase domain; the sequence is ETRELQALSA…QKWQALAEQQ (325 aa). The active-site Proton donor is the His-603. Zn(2+) is bound by residues His-607, His-643, Asp-644, and Asp-754. Asp-644 provides a ligand contact to Mg(2+). Gln-807 is a binding site for 3',5'-cyclic GMP.

The protein belongs to the cyclic nucleotide phosphodiesterase family. Zn(2+) is required as a cofactor. The cofactor is Mg(2+). Post-translationally, phosphorylation is regulated by binding of cGMP to the two allosteric sites. Phosphorylation by PRKG1 leads to its activation.

It carries out the reaction 3',5'-cyclic GMP + H2O = GMP + H(+). It participates in purine metabolism; 3',5'-cyclic GMP degradation; GMP from 3',5'-cyclic GMP: step 1/1. Functionally, plays a role in signal transduction by regulating the intracellular concentration of cyclic nucleotides. This phosphodiesterase catalyzes the specific hydrolysis of cGMP to 5'-GMP. Specifically regulates nitric-oxide-generated cGMP. The protein is cGMP-specific 3',5'-cyclic phosphodiesterase (Pde5a) of Mus musculus (Mouse).